The primary structure comprises 373 residues: 4-hydroxy-3-methylbut-2-en-1-yl diphosphate synthase (flavodoxin) (373 aa).

[4Fe-4S] cluster contacts are provided by C270, C273, C305, and E312.

This sequence belongs to the IspG family. Requires [4Fe-4S] cluster as cofactor.

The catalysed reaction is (2E)-4-hydroxy-3-methylbut-2-enyl diphosphate + oxidized [flavodoxin] + H2O + 2 H(+) = 2-C-methyl-D-erythritol 2,4-cyclic diphosphate + reduced [flavodoxin]. It functions in the pathway isoprenoid biosynthesis; isopentenyl diphosphate biosynthesis via DXP pathway; isopentenyl diphosphate from 1-deoxy-D-xylulose 5-phosphate: step 5/6. In terms of biological role, converts 2C-methyl-D-erythritol 2,4-cyclodiphosphate (ME-2,4cPP) into 1-hydroxy-2-methyl-2-(E)-butenyl 4-diphosphate. This is 4-hydroxy-3-methylbut-2-en-1-yl diphosphate synthase (flavodoxin) from Klebsiella pneumoniae subsp. pneumoniae (strain ATCC 700721 / MGH 78578).